We begin with the raw amino-acid sequence, 397 residues long: MATDKGLEDVPEGQIESNYDETVDSFDDMNLKSELLRGIYAYGFERPSAIQQRAIMPVIKGHDVIAQAQSGTGKTATFSISVLQKIDPTVKSCQALILAPTRELAQQIQKVVIAIGDFMNIECHACIGGTSVRDDMKALQDGPQVIVGTPGRVHDMIQRRILKTDQMKMFVLDEADEMLSRGFTEQIYDIFQLLPQSTQVVLLSATMPQDVLEVTTKFMRDPVRILVKKDELTLEGIKQFYIAVEKEDWKLDTLSDLYETVTITQAVIFCNTRRKVDWLTDKLQARDFTVSAMHGDMDQTQRDLIMKEFRSGSSRVLIATDLLARGIDVQQVSLVINYDLPANRENYIHRIGRGGRFGRKGVAINFVTADDVRMMREIEQFYSTQIEEMPMNVADLI.

A Q motif motif is present at residues Asp24 to Gln52. The region spanning Ile55–Ile225 is the Helicase ATP-binding domain. Ala68–Thr75 provides a ligand contact to ATP. The DEAD box signature appears at Asp173–Asp176. The Helicase C-terminal domain maps to Gly236–Ile397.

The protein belongs to the DEAD box helicase family. eIF4A subfamily. As to quaternary structure, component of the eIF4F complex, which composition varies with external and internal environmental conditions. It is composed of at least eIF4A, eIF4E and eIF4G.

The protein resides in the cytoplasm. The catalysed reaction is ATP + H2O = ADP + phosphate + H(+). Functionally, ATP-dependent RNA helicase which is a subunit of the eIF4F complex involved in cap recognition and is required for mRNA binding to ribosome. In the current model of translation initiation, eIF4A unwinds RNA secondary structures in the 5'-UTR of mRNAs which is necessary to allow efficient binding of the small ribosomal subunit, and subsequent scanning for the initiator codon. The polypeptide is ATP-dependent RNA helicase eIF4A (TIF1) (Chaetomium globosum (strain ATCC 6205 / CBS 148.51 / DSM 1962 / NBRC 6347 / NRRL 1970) (Soil fungus)).